We begin with the raw amino-acid sequence, 382 residues long: 1-deoxy-D-xylulose 5-phosphate reductoisomerase (382 aa).

Positions 10, 11, 12, 13, 36, and 122 each coordinate NADPH. Residue Lys123 participates in 1-deoxy-D-xylulose 5-phosphate binding. Glu124 contributes to the NADPH binding site. Residue Asp148 coordinates Mn(2+). 1-deoxy-D-xylulose 5-phosphate contacts are provided by Ser149, Glu150, Ser174, and His197. A Mn(2+)-binding site is contributed by Glu150. An NADPH-binding site is contributed by Gly203. The 1-deoxy-D-xylulose 5-phosphate site is built by Ser210, Asn215, Lys216, and Glu219. Glu219 is a Mn(2+) binding site.

Belongs to the DXR family. Requires Mg(2+) as cofactor. Mn(2+) serves as cofactor.

The enzyme catalyses 2-C-methyl-D-erythritol 4-phosphate + NADP(+) = 1-deoxy-D-xylulose 5-phosphate + NADPH + H(+). The protein operates within isoprenoid biosynthesis; isopentenyl diphosphate biosynthesis via DXP pathway; isopentenyl diphosphate from 1-deoxy-D-xylulose 5-phosphate: step 1/6. Catalyzes the NADPH-dependent rearrangement and reduction of 1-deoxy-D-xylulose-5-phosphate (DXP) to 2-C-methyl-D-erythritol 4-phosphate (MEP). This Chlorobium chlorochromatii (strain CaD3) protein is 1-deoxy-D-xylulose 5-phosphate reductoisomerase.